A 388-amino-acid polypeptide reads, in one-letter code: 2-methylene-furan-3-one reductase (388 aa).

Residues 1–60 constitute a chloroplast transit peptide; the sequence is MEALLSSTTLQLKPLHPPSSFSSLHSPFSSISVLRVKGSKKAETFIQRSNFSTVLPLRVS. Residues K125, 240-241, 263-266, Y281, 330-332, and 377-378 each bind NADP(+); these read GV, STGK, FVV, and RA. K125 is a binding site for substrate.

This sequence belongs to the zinc-containing alcohol dehydrogenase family. Quinone oxidoreductase subfamily. Monomer.

It is found in the plastid. The protein resides in the chloroplast. It carries out the reaction 4-hydroxy-2,5-dimethyl-furan-3(2H)-one + NADP(+) = 4-hydroxy-5-methyl-2-methylenefuran-3(2H)-one + NADPH + H(+). In terms of biological role, enone oxidoreductase involved in the biosynthesis of 4-hydroxy-2,5-dimethyl-3(2H)-furanone (HDMF or furaneol). Can use both NADH and NADPH as the electron donor. This Solanum lycopersicum (Tomato) protein is 2-methylene-furan-3-one reductase (EO).